The primary structure comprises 106 residues: uncharacterized protein (106 aa).

Residues 1 to 46 (MPQGGTPCRRARRAVRPERPTSPEGVFCVGGGAPGGPPDTTNTVSA) are disordered.

This is an uncharacterized protein from Gracula (BFDV).